Here is a 222-residue protein sequence, read N- to C-terminus: Thiamine-phosphate synthase (222 aa).

4-amino-2-methyl-5-(diphosphooxymethyl)pyrimidine is bound by residues 42–46 and Asn-74; that span reads QYRDK. The Mg(2+) site is built by Asp-75 and Asp-94. Thr-113 is a binding site for 4-amino-2-methyl-5-(diphosphooxymethyl)pyrimidine. 2-[(2R,5Z)-2-carboxy-4-methylthiazol-5(2H)-ylidene]ethyl phosphate is bound at residue 140–142; the sequence is SAT. 4-amino-2-methyl-5-(diphosphooxymethyl)pyrimidine is bound at residue Lys-143. Gly-169 lines the 2-[(2R,5Z)-2-carboxy-4-methylthiazol-5(2H)-ylidene]ethyl phosphate pocket.

Belongs to the thiamine-phosphate synthase family. Mg(2+) is required as a cofactor.

The enzyme catalyses 2-[(2R,5Z)-2-carboxy-4-methylthiazol-5(2H)-ylidene]ethyl phosphate + 4-amino-2-methyl-5-(diphosphooxymethyl)pyrimidine + 2 H(+) = thiamine phosphate + CO2 + diphosphate. It carries out the reaction 2-(2-carboxy-4-methylthiazol-5-yl)ethyl phosphate + 4-amino-2-methyl-5-(diphosphooxymethyl)pyrimidine + 2 H(+) = thiamine phosphate + CO2 + diphosphate. It catalyses the reaction 4-methyl-5-(2-phosphooxyethyl)-thiazole + 4-amino-2-methyl-5-(diphosphooxymethyl)pyrimidine + H(+) = thiamine phosphate + diphosphate. It functions in the pathway cofactor biosynthesis; thiamine diphosphate biosynthesis; thiamine phosphate from 4-amino-2-methyl-5-diphosphomethylpyrimidine and 4-methyl-5-(2-phosphoethyl)-thiazole: step 1/1. In terms of biological role, condenses 4-methyl-5-(beta-hydroxyethyl)thiazole monophosphate (THZ-P) and 2-methyl-4-amino-5-hydroxymethyl pyrimidine pyrophosphate (HMP-PP) to form thiamine monophosphate (TMP). This Marinobacter nauticus (strain ATCC 700491 / DSM 11845 / VT8) (Marinobacter aquaeolei) protein is Thiamine-phosphate synthase.